A 426-amino-acid chain; its full sequence is Histidine--tRNA ligase (426 aa).

Belongs to the class-II aminoacyl-tRNA synthetase family. Homodimer.

It localises to the cytoplasm. The catalysed reaction is tRNA(His) + L-histidine + ATP = L-histidyl-tRNA(His) + AMP + diphosphate + H(+). The protein is Histidine--tRNA ligase of Streptococcus agalactiae serotype Ia (strain ATCC 27591 / A909 / CDC SS700).